The sequence spans 105 residues: DNA-directed RNA polymerase subunit omega (105 aa).

This sequence belongs to the RNA polymerase subunit omega family. The RNAP catalytic core consists of 2 alpha, 1 beta, 1 beta' and 1 omega subunit. When a sigma factor is associated with the core the holoenzyme is formed, which can initiate transcription.

It catalyses the reaction RNA(n) + a ribonucleoside 5'-triphosphate = RNA(n+1) + diphosphate. Its function is as follows. Promotes RNA polymerase assembly. Latches the N- and C-terminal regions of the beta' subunit thereby facilitating its interaction with the beta and alpha subunits. In Streptococcus mutans serotype c (strain ATCC 700610 / UA159), this protein is DNA-directed RNA polymerase subunit omega.